The following is a 918-amino-acid chain: MSYNRLGDPYGDDRDARSPIMNPSSLSNRSPSPGRPLDGYQLSDAPYGHHHHIEMPSSDRLAEQPTYSVERIPQSYGHNEAYEAQHQHYPGYEYSVDPEAHHDAYYTQPYQPTVTPGHDDYDLGQYPGHQHSYQDDEPILQPEDPFQAQNPYSDDYQEDMTIAPTPSPAPLRRWKTVKEVQLFQGNLVLDCPIAPKLLNQIPHAENGQRDEFTHMRYSAATCDPKDFFEERFTLRQKLFAKPRHTELFIVVTMYNEDDFLFARTMVGVFKNIEHMCSRTRSKTWGKDAWKKIVVCVISDGRAKINPRTRAVLAGLGCYQDGIAKQQVNGKDVTAHIYEYTTQVGMELKGNQVHLKPRSGVPVQMIFCLKEKNQKKINSHRWFFQAFGRVLDPNICVLLDAGTQPGKDSIYRLWKAFDVEPMCGGACGEIKVMLDHGKKLFNPLVAGQNFEYKLSNILDKPLESAFGFISVLPGAFSAYRYIALQNDKNGQGPLERYFLGEKMHGANAGIFTANMYLAEDRILCFEIVTKRNCRWLLQYVKSSTGETDVPDQMAEFILQRRRWLNGSFFAAVYAITHFYQLWRSDHSFIRKFMLLIETIYQTINMLFAWFGIGNFFLVFHILTTYLGDADLLGTAGKVLGVVFEWLYLATLVTCFVLSLGNRPGGSNKLYMTMVYLWVFIMIYLAFAAVFVTVRSIQEEVKDGSFTFSTLFTNSTFFSIIVSLGSTYVMWFIASIIFMDPWHMFTCFIQYILLTPTYINVLNIYAFCNTHDITWGTKGDDKAEKLPSANLKPGGKVDVNIPQDDGDLNAQYEAELMKFAQKPPKEIKTISEEERQADYYKGFRSSVVLVWVFCNFALGAVVLSSAGLDRFSDDAEAAETDRNNRAMIYMAVVLWSVAGLSIFKFLGAMWFLVVRMFRGV.

The disordered stretch occupies residues 1–63 (MSYNRLGDPY…EMPSSDRLAE (63 aa)). The segment covering 22 to 37 (NPSSLSNRSPSPGRPL) has biased composition (low complexity). A run of 4 helical transmembrane segments spans residues 562–581 (WLNG…YQLW), 605–625 (LFAW…TTYL), 637–657 (VLGV…FVLS), and 672–692 (MVYL…FVTV). Asn-712 carries N-linked (GlcNAc...) asparagine glycosylation. A run of 3 helical transmembrane segments spans residues 715–735 (FFSI…ASII), 845–865 (VVLV…SSAG), and 890–910 (VVLW…MWFL).

The protein belongs to the chitin synthase family. Class I subfamily. Mainly expressed in hyphae and conidiphores. Relatively strongly expressed in young cleistothecia and in mature ascospores, but negligible in Huelle cells.

It localises to the cell membrane. The protein localises to the cell septum. It is found in the cell tip. The catalysed reaction is [(1-&gt;4)-N-acetyl-beta-D-glucosaminyl](n) + UDP-N-acetyl-alpha-D-glucosamine = [(1-&gt;4)-N-acetyl-beta-D-glucosaminyl](n+1) + UDP + H(+). Its function is as follows. Polymerizes chitin, a structural polymer of the cell wall and septum, by transferring the sugar moiety of UDP-GlcNAc to the non-reducing end of the growing chitin polymer. ChsC and chsA share critical functions in hyphal wall integrity and differentiation. ChsA and chsC share also overlapping roles in septum formation. The chain is Chitin synthase C from Emericella nidulans (strain FGSC A4 / ATCC 38163 / CBS 112.46 / NRRL 194 / M139) (Aspergillus nidulans).